A 201-amino-acid chain; its full sequence is Holliday junction branch migration complex subunit RuvA (201 aa).

The interval 1 to 61 (MIEFVKGTID…EDAFSLYGFS (61 aa)) is domain I. Residues 62-140 (TREEKALFTK…DVVPEMIDNL (79 aa)) form a domain II region. Residues 141–150 (FNHEARIEKQ) form a flexible linker region. The tract at residues 151 to 201 (EAETALDEALEALRVLGYAEKEIKKVLPHLKEETALSTDQYVKKALQKLLK) is domain III.

It belongs to the RuvA family. As to quaternary structure, homotetramer. Forms an RuvA(8)-RuvB(12)-Holliday junction (HJ) complex. HJ DNA is sandwiched between 2 RuvA tetramers; dsDNA enters through RuvA and exits via RuvB. An RuvB hexamer assembles on each DNA strand where it exits the tetramer. Each RuvB hexamer is contacted by two RuvA subunits (via domain III) on 2 adjacent RuvB subunits; this complex drives branch migration. In the full resolvosome a probable DNA-RuvA(4)-RuvB(12)-RuvC(2) complex forms which resolves the HJ.

Its subcellular location is the cytoplasm. In terms of biological role, the RuvA-RuvB-RuvC complex processes Holliday junction (HJ) DNA during genetic recombination and DNA repair, while the RuvA-RuvB complex plays an important role in the rescue of blocked DNA replication forks via replication fork reversal (RFR). RuvA specifically binds to HJ cruciform DNA, conferring on it an open structure. The RuvB hexamer acts as an ATP-dependent pump, pulling dsDNA into and through the RuvAB complex. HJ branch migration allows RuvC to scan DNA until it finds its consensus sequence, where it cleaves and resolves the cruciform DNA. This Bacillus velezensis (strain DSM 23117 / BGSC 10A6 / LMG 26770 / FZB42) (Bacillus amyloliquefaciens subsp. plantarum) protein is Holliday junction branch migration complex subunit RuvA.